The sequence spans 153 residues: Bifunctional protein GAL10 (153 aa).

Residues 1-153 (MSDDIFLVTG…IPIPEHCPME (153 aa)) are galactowaldenase.

The protein in the N-terminal section; belongs to the NAD(P)-dependent epimerase/dehydratase family. It in the C-terminal section; belongs to the aldose epimerase family. NAD(+) is required as a cofactor.

The enzyme catalyses UDP-alpha-D-glucose = UDP-alpha-D-galactose. It catalyses the reaction alpha-D-glucose = beta-D-glucose. The protein operates within carbohydrate metabolism; galactose metabolism. It participates in carbohydrate metabolism; hexose metabolism. Functionally, mutarotase converts alpha-aldose to the beta-anomer. It is active on D-glucose, L-arabinose, D-xylose, D-galactose, maltose and lactose. In Candida maltosa (Yeast), this protein is Bifunctional protein GAL10 (GAL10).